The sequence spans 115 residues: uncharacterized protein (115 aa).

This is an uncharacterized protein from Acidianus convivator (ATV).